The sequence spans 345 residues: Glycerol-3-phosphate dehydrogenase [NAD(P)+] (345 aa).

4 residues coordinate NADPH: serine 23, tyrosine 24, histidine 44, and lysine 118. Residues lysine 118, glycine 147, and threonine 149 each contribute to the sn-glycerol 3-phosphate site. Alanine 151 is an NADPH binding site. The sn-glycerol 3-phosphate site is built by lysine 203, aspartate 256, serine 266, arginine 267, and asparagine 268. Lysine 203 (proton acceptor) is an active-site residue. Residue arginine 267 coordinates NADPH. Residues valine 291 and glutamate 293 each contribute to the NADPH site.

Belongs to the NAD-dependent glycerol-3-phosphate dehydrogenase family.

It localises to the cytoplasm. It carries out the reaction sn-glycerol 3-phosphate + NAD(+) = dihydroxyacetone phosphate + NADH + H(+). It catalyses the reaction sn-glycerol 3-phosphate + NADP(+) = dihydroxyacetone phosphate + NADPH + H(+). It functions in the pathway membrane lipid metabolism; glycerophospholipid metabolism. Functionally, catalyzes the reduction of the glycolytic intermediate dihydroxyacetone phosphate (DHAP) to sn-glycerol 3-phosphate (G3P), the key precursor for phospholipid synthesis. This is Glycerol-3-phosphate dehydrogenase [NAD(P)+] from Vibrio campbellii (strain ATCC BAA-1116).